A 949-amino-acid chain; its full sequence is Zinc finger CCHC domain-containing protein 14 (949 aa).

6 disordered regions span residues serine 25 to alanine 44, glutamate 59 to histidine 92, serine 200 to valine 221, alanine 236 to cysteine 262, lysine 355 to lysine 457, and proline 739 to alanine 779. The segment covering asparagine 28–glycine 43 has biased composition (gly residues). Over residues proline 61–histidine 78 the composition is skewed to polar residues. Residues serine 200–serine 219 show a composition bias toward low complexity. Residues histidine 395–proline 411 are compositionally biased toward basic and acidic residues. Low complexity predominate over residues serine 416–serine 425. Over residues alanine 431–lysine 457 the composition is skewed to basic and acidic residues. The CCHC-type zinc finger occupies leucine 906–glutamine 923.

The chain is Zinc finger CCHC domain-containing protein 14 (ZCCHC14) from Homo sapiens (Human).